Consider the following 441-residue polypeptide: 3-phosphoshikimate 1-carboxyvinyltransferase (441 aa).

K26, S27, and R31 together coordinate 3-phosphoshikimate. Residue K26 participates in phosphoenolpyruvate binding. G99 and R127 together coordinate phosphoenolpyruvate. Positions 173, 174, 175, 203, 320, and 347 each coordinate 3-phosphoshikimate. A phosphoenolpyruvate-binding site is contributed by Q175. D320 (proton acceptor) is an active-site residue. Positions 351, 393, and 423 each coordinate phosphoenolpyruvate.

Belongs to the EPSP synthase family. Monomer.

It localises to the cytoplasm. It catalyses the reaction 3-phosphoshikimate + phosphoenolpyruvate = 5-O-(1-carboxyvinyl)-3-phosphoshikimate + phosphate. The protein operates within metabolic intermediate biosynthesis; chorismate biosynthesis; chorismate from D-erythrose 4-phosphate and phosphoenolpyruvate: step 6/7. In terms of biological role, catalyzes the transfer of the enolpyruvyl moiety of phosphoenolpyruvate (PEP) to the 5-hydroxyl of shikimate-3-phosphate (S3P) to produce enolpyruvyl shikimate-3-phosphate and inorganic phosphate. The sequence is that of 3-phosphoshikimate 1-carboxyvinyltransferase from Janthinobacterium sp. (strain Marseille) (Minibacterium massiliensis).